The sequence spans 395 residues: Aurora kinase A (395 aa).

The segment at 1–114 is disordered; that stretch reads MDRCKENCVS…QASLQKTEDT (114 aa). Composition is skewed to polar residues over residues 29 to 60 and 84 to 99; these read QIPS…SQAQ and RLNN…ASGN. 2 positions are modified to phosphoserine: Ser-40 and Ser-50. Basic and acidic residues predominate over residues 100–114; sequence DSEKEQASLQKTEDT. In terms of domain architecture, Protein kinase spans 124-374; that stretch reads FDIGRPLGKG…LAEVLEHPWI (251 aa). ATP is bound by residues Lys-134, Lys-153, and 201–204; that span reads LEYA. Asp-247 (proton acceptor) is an active-site residue. Lys-249 participates in a covalent cross-link: Glycyl lysine isopeptide (Lys-Gly) (interchain with G-Cter in SUMO2). ATP contacts are provided by residues 251-252 and Asp-265; that span reads EN. Positions 271–284 are activation segment; the sequence is HAPSSRRTTMCGTL. Phosphothreonine is present on residues Thr-278 and Thr-279. Ser-333 is subject to Phosphoserine; by PKA and PAK. Residues 376–385 show a composition bias toward polar residues; sequence ANSSKPPTGH. The segment at 376 to 395 is disordered; the sequence is ANSSKPPTGHTSKEPTSKSS. Basic and acidic residues predominate over residues 386 to 395; the sequence is TSKEPTSKSS.

This sequence belongs to the protein kinase superfamily. Ser/Thr protein kinase family. Aurora subfamily. Part of a complex composed of NEDD9, AURKA and CTTN; within the complex NEDD9 acts as a scaffold protein and is required for complex formation. Identified in a complex with AUNIP and NIN. Interacts with CPEB1, JTB, TACC1, TPX2, PPP2CA, as well as with the protein phosphatase type 1 (PP1) isoforms PPP1CA, PPP1CB and PPP1CC. Also interacts with its substrates ARHGEF2, BORA, KIF2A, PARD3, and p53/TP53. Interaction with BORA promotes phosphorylation of PLK1. Interacts with GADD45A, competing with its oligomerization. Interacts with FBXL7 and CIMAP3. Interacts (via C-terminus) with AUNIP (via C-terminus). Interacts with SIRT2. Interacts with FRY; this interaction facilitates AURKA-mediated PLK1 phosphorylation. Interacts with MYCN; interaction is phospho-independent and triggers AURKA activation; AURKA competes with FBXW7 for binding to unphosphorylated MYCN but not for binding to phosphorylated MYCN. Interacts with HNRNPU. Interacts with AAAS. Interacts with KLHL18 and CUL3. Interacts with FOXP1. Interacts with HDAC6; AURKA-mediated phosphorylation of HDAC6 promotes deacetylation of alpha-tubulin. Activated by phosphorylation at Thr-279; this brings about a change in the conformation of the activation segment. Phosphorylation at Thr-279 varies during the cell cycle and is highest during M phase. Autophosphorylated at Thr-279 upon TPX2 binding. Thr-279 can be phosphorylated by several kinases, including PAK and PKA. Protein phosphatase type 1 (PP1) binds AURKA and inhibits its activity by dephosphorylating Thr-279 during mitosis. Phosphorylation at Ser-333 decreases the kinase activity. PPP2CA controls degradation by dephosphorylating Ser-52 at the end of mitosis. In terms of processing, ubiquitinated by the anaphase-promoting complex (APC), leading to its degradation by the proteasome. Ubiquitinated by CHFR, leading to its degradation by the proteasome. Ubiquitinated by the E3 ubiquitin-protein ligase complex SCF(FBXL7) during mitosis, leading to its degradation by the proteasome. In terms of tissue distribution, detected in embryonic neurons in dorsal root ganglia and brain cortex (at protein level). Highly expressed in testis, in about one third of the seminiferous tubules. Expression is restricted to specific spermatocytes nearing completion of prophase, with levels falling off on transition to elongated spermatids. Highly expressed in the ovary, expression in the oocyte starts around the transition to large growing follicle. Abundant expression is seen in the proliferating granulosa and thecal cells of the growing follicle, and in the young corpus luteum. Very weakly expressed in spleen and intestine.

Its subcellular location is the cytoplasm. The protein localises to the cytoskeleton. It localises to the microtubule organizing center. It is found in the centrosome. The protein resides in the spindle pole. Its subcellular location is the centriole. The protein localises to the cell projection. It localises to the neuron projection. It is found in the cilium. The protein resides in the cilium basal body. Its subcellular location is the basolateral cell membrane. The enzyme catalyses L-seryl-[protein] + ATP = O-phospho-L-seryl-[protein] + ADP + H(+). It catalyses the reaction L-threonyl-[protein] + ATP = O-phospho-L-threonyl-[protein] + ADP + H(+). Its activity is regulated as follows. Activation of CDK1, appears to be an upstream event of AURKA activation. Phosphatase inhibitor-2 (PPP1R2) and TPX2 act also as activators. Inactivated by the G2 checkpoint. Inhibited by GADD45A and p53/TP53, and through dephosphorylation by protein phosphatase type 1 (PP1). MLN8054 is also a potent and selective inhibitor. Activated during the early phase of cilia disassembly in the presence of CIMAP3. Inhibited by the small molecule inhibitor VX-680. Functionally, mitotic serine/threonine kinase that contributes to the regulation of cell cycle progression. Associates with the centrosome and the spindle microtubules during mitosis and plays a critical role in various mitotic events including the establishment of mitotic spindle, centrosome duplication, centrosome separation as well as maturation, chromosomal alignment, spindle assembly checkpoint, and cytokinesis. Required for normal spindle positioning during mitosis and for the localization of NUMA1 and DCTN1 to the cell cortex during metaphase. Required for initial activation of CDK1 at centrosomes. Phosphorylates numerous target proteins, including ARHGEF2, BORA, BRCA1, CDC25B, DLGP5, HDAC6, KIF2A, LATS2, NDEL1, PARD3, PPP1R2, PLK1, RASSF1, TACC3, p53/TP53 and TPX2. Phosphorylates MCRS1 which is required for MCRS1-mediated kinetochore fiber assembly and mitotic progression. Regulates KIF2A tubulin depolymerase activity. Required for normal axon formation. Plays a role in microtubule remodeling during neurite extension. Important for microtubule formation and/or stabilization. Also acts as a key regulatory component of the p53/TP53 pathway, and particularly the checkpoint-response pathways critical for oncogenic transformation of cells, by phosphorylating and destabilizing p53/TP53. Phosphorylates its own inhibitors, the protein phosphatase type 1 (PP1) isoforms, to inhibit their activity. Inhibits cilia outgrowth. Required for cilia disassembly via phosphorylation of HDAC6 and subsequent deacetylation of alpha-tubulin. Regulates protein levels of the anti-apoptosis protein BIRC5 by suppressing the expression of the SCF(FBXL7) E3 ubiquitin-protein ligase substrate adapter FBXL7 through the phosphorylation of the transcription factor FOXP1. The chain is Aurora kinase A (Aurka) from Mus musculus (Mouse).